A 288-amino-acid chain; its full sequence is Probable endonuclease 4 (288 aa).

Residues histidine 75, histidine 115, glutamate 153, aspartate 187, histidine 190, histidine 224, aspartate 237, histidine 239, and glutamate 269 each coordinate Zn(2+).

It belongs to the AP endonuclease 2 family. It depends on Zn(2+) as a cofactor.

It catalyses the reaction Endonucleolytic cleavage to 5'-phosphooligonucleotide end-products.. Functionally, endonuclease IV plays a role in DNA repair. It cleaves phosphodiester bonds at apurinic or apyrimidinic (AP) sites, generating a 3'-hydroxyl group and a 5'-terminal sugar phosphate. The polypeptide is Probable endonuclease 4 (Chlamydia muridarum (strain MoPn / Nigg)).